A 101-amino-acid polypeptide reads, in one-letter code: Trp operon repressor homolog (101 aa).

A DNA-binding region spans residues 59 to 82; the sequence is QREIQQNLNTSAATITRGSNMIKT.

Belongs to the TrpR family. As to quaternary structure, homodimer.

It is found in the cytoplasm. This protein is an aporepressor. When complexed with L-tryptophan it binds the operator region of the trp operon and prevents the initiation of transcription. The polypeptide is Trp operon repressor homolog (Haemophilus influenzae (strain 86-028NP)).